The following is an 848-amino-acid chain: Translation initiation factor IF-2 (848 aa).

A disordered region spans residues 106–150 (TEQQTEAENSTNINLSEQTIKNNSHQSSSNTIETTQEKKQNDDLS). Residues 112–139 (AENSTNINLSEQTIKNNSHQSSSNTIET) show a composition bias toward polar residues. In terms of domain architecture, tr-type G spans 347–517 (PRAPIITVMG…LLLADMLELK (171 aa)). Residues 356-363 (GHVDHGKT) are G1. GTP is bound at residue 356–363 (GHVDHGKT). The segment at 381–385 (GITQH) is G2. A G3 region spans residues 403–406 (DTPG). GTP is bound by residues 403–407 (DTPGH) and 457–460 (NKID). Residues 457 to 460 (NKID) are G4. The interval 493 to 495 (SAL) is G5.

Belongs to the TRAFAC class translation factor GTPase superfamily. Classic translation factor GTPase family. IF-2 subfamily.

Its subcellular location is the cytoplasm. Its function is as follows. One of the essential components for the initiation of protein synthesis. Protects formylmethionyl-tRNA from spontaneous hydrolysis and promotes its binding to the 30S ribosomal subunits. Also involved in the hydrolysis of GTP during the formation of the 70S ribosomal complex. In Orientia tsutsugamushi (strain Boryong) (Rickettsia tsutsugamushi), this protein is Translation initiation factor IF-2.